Here is a 234-residue protein sequence, read N- to C-terminus: Core atranone cluster (CAC) protein 1 (234 aa).

Its pathway is mycotoxin biosynthesis. Functionally, part of the core atranone cluster (CAC) which products are predicted to catalyze most or all steps of mycotoxin atranone synthesis, starting from geranylgeranyl pyrophosphate (GGPP). The initial cyclization of GGPP to dolabellane is probably performed by the terpene cyclase ATR13. The Baeyer-Villiger oxidation near the end of the atranone synthesis, which converts atranones D and E to atranones F and G is predicted to be catalyzed by the monooxygenase ATR8. Of the CAC's other predicted gene products, the reducing PKS ATR6 might synthesize a polyketide chain. This polyketide is probably transferred onto the atranone backbone by the polyketide transferase ATR5. Other predicted CAC products include 4 oxygenases (ATR2, ATR3, ATR4, and ATR14), 3 short-chain reductases (ATR7, ATR9, and ATR10), and a methyltransferase (ATR12). These may all be involved in the various steps of atranone biosynthesis, although their specific roles must await experimental determination. This Stachybotrys chlorohalonatus (strain IBT 40285) protein is Core atranone cluster (CAC) protein 1.